Consider the following 55-residue polypeptide: Protein CADMIUM TOLERANCE 1 (55 aa).

Residues Gly-24–Tyr-40 traverse the membrane as a helical segment.

The protein belongs to the CYSTM1 family.

The protein localises to the cell membrane. It is found in the secreted. Its subcellular location is the cell wall. Its function is as follows. Confers resistance to heavy metal ions (e.g. cadmium (CdCl(2)) and copper (CuCl(2))) by chelating them at the plasma membrane of root cells, thus stopping their entry and reducing their accumulation. The protein is Protein CADMIUM TOLERANCE 1 of Echinochloa crus-galli subsp. caudata (Cockspur).